Here is a 358-residue protein sequence, read N- to C-terminus: GTPase Obg (358 aa).

The Obg domain maps to 1-158 (MFVDNVDIYV…RHVRLELKLI (158 aa)). One can recognise an OBG-type G domain in the interval 159-355 (ADVGLVGFPN…LKYLLHESVR (197 aa)). GTP contacts are provided by residues 165-172 (GFPNVGKS), 190-194 (FTTLI), 212-215 (DIPG), 280-283 (SKVD), and 336-338 (SSA). Mg(2+) contacts are provided by Ser-172 and Thr-192.

It belongs to the TRAFAC class OBG-HflX-like GTPase superfamily. OBG GTPase family. In terms of assembly, monomer. It depends on Mg(2+) as a cofactor.

It localises to the cytoplasm. Functionally, an essential GTPase which binds GTP, GDP and possibly (p)ppGpp with moderate affinity, with high nucleotide exchange rates and a fairly low GTP hydrolysis rate. Plays a role in control of the cell cycle, stress response, ribosome biogenesis and in those bacteria that undergo differentiation, in morphogenesis control. This chain is GTPase Obg, found in Wolinella succinogenes (strain ATCC 29543 / DSM 1740 / CCUG 13145 / JCM 31913 / LMG 7466 / NCTC 11488 / FDC 602W) (Vibrio succinogenes).